Reading from the N-terminus, the 559-residue chain is Aminopeptidase Q (559 aa).

Topologically, residues 1–13 are cytoplasmic; it reads MSRPFSSGVYVSR. Residues 14-34 traverse the membrane as a helical; Signal-anchor for type II membrane protein segment; the sequence is GVALLLAALTAVLLLVLVALA. Topologically, residues 35–559 are lumenal; it reads SLYGSCAHVQ…VPFRHFLAEH (525 aa). N121 and N129 each carry an N-linked (GlcNAc...) asparagine glycan. Residue E237 participates in substrate binding. Residues N258, N285, and N343 are each glycosylated (N-linked (GlcNAc...) asparagine). Position 376-380 (376-380) interacts with substrate; it reads GAMEN. H412 contributes to the Zn(2+) binding site. E413 functions as the Proton acceptor in the catalytic mechanism. Residues H416 and E435 each coordinate Zn(2+).

Belongs to the peptidase M1 family. As to quaternary structure, homodimer. It depends on Zn(2+) as a cofactor. In terms of processing, N-glycosylated.

It localises to the membrane. Inhibited by bestatin. Its function is as follows. Metalloprotease which may be important for placentation by regulating biological activity of key peptides at the embryo-maternal interface. On synthetic substrates it shows a marked preference for Leu-4-methylcoumaryl-7-amide (Leu-MCA) over Met-MCA, Arg-LCA and Lys-LCA. Cleaves the N-terminal amino acid of several peptides such as angiotensin-3, kisspeptin-10 and endokinin C. The protein is Aminopeptidase Q of Mus musculus (Mouse).